The sequence spans 150 residues: Phosphopantetheine adenylyltransferase (150 aa).

T15 is a substrate binding site. Residues 15-16 and H23 each bind ATP; that span reads TF. Substrate contacts are provided by I80 and R94. Residues 95 to 97, E105, and 130 to 136 each bind ATP; these read GIR and LENISSR.

It belongs to the bacterial CoaD family. Homohexamer. Requires Mg(2+) as cofactor.

It is found in the cytoplasm. It catalyses the reaction (R)-4'-phosphopantetheine + ATP + H(+) = 3'-dephospho-CoA + diphosphate. It participates in cofactor biosynthesis; coenzyme A biosynthesis; CoA from (R)-pantothenate: step 4/5. Functionally, reversibly transfers an adenylyl group from ATP to 4'-phosphopantetheine, yielding dephospho-CoA (dPCoA) and pyrophosphate. The sequence is that of Phosphopantetheine adenylyltransferase from Malacoplasma penetrans (strain HF-2) (Mycoplasma penetrans).